Consider the following 142-residue polypeptide: COA8 family protein Y39B6A.34, mitochondrial (142 aa).

This sequence belongs to the COA8 family.

The protein resides in the mitochondrion inner membrane. In terms of biological role, may be required for cytochrome c complex (COX) assembly and function, COX being the terminal component of the mitochondrial respiratory chain. In Caenorhabditis elegans, this protein is COA8 family protein Y39B6A.34, mitochondrial.